The following is a 334-amino-acid chain: GTP 3',8-cyclase (334 aa).

The Radical SAM core domain maps to 11–236 (GFNRKIDYLR…ESTESSQGPA (226 aa)). Arg-20 serves as a coordination point for GTP. Residues Cys-27 and Cys-31 each contribute to the [4Fe-4S] cluster site. S-adenosyl-L-methionine is bound at residue Tyr-33. Cys-34 contributes to the [4Fe-4S] cluster binding site. Position 69 (Arg-69) interacts with GTP. Gly-73 lines the S-adenosyl-L-methionine pocket. Thr-100 contributes to the GTP binding site. Residue Ser-124 coordinates S-adenosyl-L-methionine. Lys-161 contributes to the GTP binding site. S-adenosyl-L-methionine is bound at residue Met-195. Positions 260 and 263 each coordinate [4Fe-4S] cluster. Residue 265 to 267 (RVR) participates in GTP binding. Cys-277 contacts [4Fe-4S] cluster.

Belongs to the radical SAM superfamily. MoaA family. In terms of assembly, monomer and homodimer. Requires [4Fe-4S] cluster as cofactor.

It catalyses the reaction GTP + AH2 + S-adenosyl-L-methionine = (8S)-3',8-cyclo-7,8-dihydroguanosine 5'-triphosphate + 5'-deoxyadenosine + L-methionine + A + H(+). It functions in the pathway cofactor biosynthesis; molybdopterin biosynthesis. Its function is as follows. Catalyzes the cyclization of GTP to (8S)-3',8-cyclo-7,8-dihydroguanosine 5'-triphosphate. This is GTP 3',8-cyclase from Pseudomonas putida (strain W619).